The following is a 128-amino-acid chain: 2-iminobutanoate/2-iminopropanoate deaminase (128 aa).

R105 contributes to the substrate binding site.

This sequence belongs to the RutC family. Homotrimer.

It localises to the cytoplasm. The enzyme catalyses 2-iminobutanoate + H2O = 2-oxobutanoate + NH4(+). It carries out the reaction 2-iminopropanoate + H2O = pyruvate + NH4(+). It functions in the pathway amino-acid biosynthesis; L-isoleucine biosynthesis; 2-oxobutanoate from L-threonine. Accelerates the release of ammonia from reactive enamine/imine intermediates of the PLP-dependent threonine dehydratase (IlvA) in the low water environment of the cell. It catalyzes the deamination of enamine/imine intermediates to yield 2-ketobutyrate and ammonia. It is required for the detoxification of reactive intermediates of IlvA due to their highly nucleophilic abilities and to avoid they are captured by anthranilate phosphoribosyltransferase (TrpD) to generate PRA, an intermediate in the alternative pyrimidine biosynthetic (APB) pathway. Also required for full activity of IlvE which is involved in the isoleucine biosynthesis. RidA also accelerates the release of pyruvate produced by IlvA from L-serine. The sequence is that of 2-iminobutanoate/2-iminopropanoate deaminase from Salmonella typhimurium (strain LT2 / SGSC1412 / ATCC 700720).